Reading from the N-terminus, the 433-residue chain is 3-phosphoshikimate 1-carboxyvinyltransferase (433 aa).

3-phosphoshikimate contacts are provided by K23, S24, and R28. K23 contributes to the phosphoenolpyruvate binding site. Phosphoenolpyruvate is bound by residues G95 and R123. Residues S167, Q169, D317, and K344 each contribute to the 3-phosphoshikimate site. Q169 contributes to the phosphoenolpyruvate binding site. D317 serves as the catalytic Proton acceptor. Phosphoenolpyruvate-binding residues include R348 and R390.

This sequence belongs to the EPSP synthase family. Monomer.

Its subcellular location is the cytoplasm. The catalysed reaction is 3-phosphoshikimate + phosphoenolpyruvate = 5-O-(1-carboxyvinyl)-3-phosphoshikimate + phosphate. It participates in metabolic intermediate biosynthesis; chorismate biosynthesis; chorismate from D-erythrose 4-phosphate and phosphoenolpyruvate: step 6/7. In terms of biological role, catalyzes the transfer of the enolpyruvyl moiety of phosphoenolpyruvate (PEP) to the 5-hydroxyl of shikimate-3-phosphate (S3P) to produce enolpyruvyl shikimate-3-phosphate and inorganic phosphate. This chain is 3-phosphoshikimate 1-carboxyvinyltransferase, found in Staphylococcus epidermidis (strain ATCC 12228 / FDA PCI 1200).